The sequence spans 197 residues: MSLGRLCRLLKPALLCGALAAPGLAGTMCASRDDWRCAGSMHEFSAKDIDGHMVNLDKYRGFVCIVTNVASQUGKTEVNYTQLVDLHARYAECGLRILAFPCNQFGKQEPGSNEEIKEFAAGYNVKFDMFSKICVNGDDAHPLWKWMKIQPKGKGILGNAIKWNFTKFLIDKNGCVVKRYGPMEEPQVIEKDLPHYF.

Ser40 is modified (phosphoserine). Sec73 is an active-site residue. A non-standard amino acid (selenocysteine) is located at residue Sec73.

It belongs to the glutathione peroxidase family. As to quaternary structure, monomer. Has a tendency to form higher mass oligomers. Interacts with FUNDC1; this interaction promotes GPX4 recruitment into mitochondria through TOM/TIM complex where it is degraded by mitophagy.

It is found in the mitochondrion. It localises to the cytoplasm. It catalyses the reaction a hydroperoxy polyunsaturated fatty acid + 2 glutathione = a hydroxy polyunsaturated fatty acid + glutathione disulfide + H2O. The enzyme catalyses (12S)-hydroperoxy-(5Z,8Z,10E,14Z)-eicosatetraenoate + 2 glutathione = (12S)-hydroxy-(5Z,8Z,10E,14Z)-eicosatetraenoate + glutathione disulfide + H2O. The catalysed reaction is (13S)-hydroperoxy-(9Z,11E)-octadecadienoate + 2 glutathione = (13S)-hydroxy-(9Z,11E)-octadecadienoate + glutathione disulfide + H2O. Essential antioxidant peroxidase that directly reduces phospholipid hydroperoxide even if they are incorporated in membranes and lipoproteins. Can also reduce fatty acid hydroperoxide, cholesterol hydroperoxide and thymine hydroperoxide. Plays a key role in protecting cells from oxidative damage by preventing membrane lipid peroxidation. Required to prevent cells from ferroptosis, a non-apoptotic cell death resulting from an iron-dependent accumulation of lipid reactive oxygen species. The presence of selenocysteine (Sec) versus Cys at the active site is essential for life: it provides resistance to overoxidation and prevents cells against ferroptosis. The presence of Sec at the active site is also essential for the survival of a specific type of parvalbumin-positive interneurons, thereby preventing against fatal epileptic seizures. May be required to protect cells from the toxicity of ingested lipid hydroperoxides. Required for normal sperm development and male fertility. Essential for maturation and survival of photoreceptor cells. Plays a role in a primary T-cell response to viral and parasitic infection by protecting T-cells from ferroptosis and by supporting T-cell expansion. Plays a role of glutathione peroxidase in platelets in the arachidonic acid metabolism. Reduces hydroperoxy ester lipids formed by a 15-lipoxygenase that may play a role as down-regulator of the cellular 15-lipoxygenase pathway. In Sapajus apella (Brown-capped capuchin), this protein is Phospholipid hydroperoxide glutathione peroxidase.